The chain runs to 214 residues: Adenylate kinase (214 aa).

10–15 (GAGKGT) lines the ATP pocket. The NMP stretch occupies residues 30 to 59 (STGDMFREAVASKSELGKKVEEILKRGDLV). AMP contacts are provided by residues Thr31, Arg36, 57–59 (DLV), 85–88 (GFPR), and Gln92. Positions 126 to 163 (NRRICSNCGKIYNLITLPPKVDGKCDVCGGTLYQREDD) are LID. Arg127 serves as a coordination point for ATP. The Zn(2+) site is built by Cys130 and Cys133. Residue 136 to 137 (IY) participates in ATP binding. 2 residues coordinate Zn(2+): Cys150 and Cys153. AMP-binding residues include Arg160 and Arg171. Leu199 contacts ATP.

The protein belongs to the adenylate kinase family. In terms of assembly, monomer.

The protein resides in the cytoplasm. The catalysed reaction is AMP + ATP = 2 ADP. Its pathway is purine metabolism; AMP biosynthesis via salvage pathway; AMP from ADP: step 1/1. Its function is as follows. Catalyzes the reversible transfer of the terminal phosphate group between ATP and AMP. Plays an important role in cellular energy homeostasis and in adenine nucleotide metabolism. This is Adenylate kinase from Thermosipho africanus (strain TCF52B).